The primary structure comprises 218 residues: uncharacterized protein (218 aa).

7 helical membrane passes run 9 to 29 (LLVI…VIAM), 42 to 62 (AIIL…SAAV), 67 to 87 (IPFL…QLLI), 107 to 127 (TIVL…AGAS), 134 to 154 (VVIG…LIHI), 159 to 179 (IPLL…EMIV), and 192 to 212 (GTVE…ASIY).

The protein belongs to the TerC family.

The protein localises to the cell membrane. This is an uncharacterized protein from Bacillus subtilis (strain 168).